Reading from the N-terminus, the 93-residue chain is UPF0521 protein A (93 aa).

The stretch at 2 to 58 forms a coiled coil; sequence SLKEVITSLKNDFHSINKEIDSMKENNEKQEDKIFQEIKKLKLEMELLRKDNLSFKT.

This sequence belongs to the UPF0521 family.

This chain is UPF0521 protein A, found in Dictyostelium discoideum (Social amoeba).